A 374-amino-acid polypeptide reads, in one-letter code: 4-hydroxy-3-methylbut-2-en-1-yl diphosphate synthase (flavodoxin) (374 aa).

[4Fe-4S] cluster is bound by residues Cys-268, Cys-271, Cys-303, and Glu-310.

It belongs to the IspG family. [4Fe-4S] cluster is required as a cofactor.

It carries out the reaction (2E)-4-hydroxy-3-methylbut-2-enyl diphosphate + oxidized [flavodoxin] + H2O + 2 H(+) = 2-C-methyl-D-erythritol 2,4-cyclic diphosphate + reduced [flavodoxin]. It participates in isoprenoid biosynthesis; isopentenyl diphosphate biosynthesis via DXP pathway; isopentenyl diphosphate from 1-deoxy-D-xylulose 5-phosphate: step 5/6. Its function is as follows. Converts 2C-methyl-D-erythritol 2,4-cyclodiphosphate (ME-2,4cPP) into 1-hydroxy-2-methyl-2-(E)-butenyl 4-diphosphate. In Geobacillus kaustophilus (strain HTA426), this protein is 4-hydroxy-3-methylbut-2-en-1-yl diphosphate synthase (flavodoxin).